A 260-amino-acid polypeptide reads, in one-letter code: Small ribosomal subunit protein eS1 (260 aa).

Position 30 is an N6-acetyllysine; alternate (Lys30). Residue Lys30 forms a Glycyl lysine isopeptide (Lys-Gly) (interchain with G-Cter in SUMO2); alternate linkage. An N6-acetyllysine modification is found at Lys52. Tyr151 bears the ADP-ribosyltyrosine mark. Residues 228-260 (HGEGSSSGKATGDETGAKVERADGYEPPVQESV) are disordered. Phosphoserine occurs at positions 232 and 233. Positions 238 to 251 (TGDETGAKVERADG) are enriched in basic and acidic residues. Residue Lys245 is modified to N6-acetyllysine; alternate. A Glycyl lysine isopeptide (Lys-Gly) (interchain with G-Cter in SUMO2); alternate cross-link involves residue Lys245. Position 252 is a phosphotyrosine (Tyr252). Position 259 is a phosphoserine (Ser259).

The protein belongs to the eukaryotic ribosomal protein eS1 family. Component of the small ribosomal subunit. Mature ribosomes consist of a small (40S) and a large (60S) subunit. The 40S subunit contains about 33 different proteins and 1 molecule of RNA (18S). The 60S subunit contains about 49 different proteins and 3 molecules of RNA (28S, 5.8S and 5S). Identified in a IGF2BP1-dependent mRNP granule complex containing untranslated mRNAs. Binds with high affinity to IPO4. Interacts with DDIT3. Part of the small subunit (SSU) processome, composed of more than 70 proteins and the RNA chaperone small nucleolar RNA (snoRNA) U3. ADP-ribosylated at Tyr-151 by PARP1 in presence of HPF1.

The protein resides in the cytoplasm. It localises to the nucleus. Its subcellular location is the nucleolus. Its function is as follows. Component of the small ribosomal subunit. The ribosome is a large ribonucleoprotein complex responsible for the synthesis of proteins in the cell. Part of the small subunit (SSU) processome, first precursor of the small eukaryotic ribosomal subunit. During the assembly of the SSU processome in the nucleolus, many ribosome biogenesis factors, an RNA chaperone and ribosomal proteins associate with the nascent pre-rRNA and work in concert to generate RNA folding, modifications, rearrangements and cleavage as well as targeted degradation of pre-ribosomal RNA by the RNA exosome. May play a role during erythropoiesis through regulation of transcription factor DDIT3. This chain is Small ribosomal subunit protein eS1, found in Felis catus (Cat).